Here is a 525-residue protein sequence, read N- to C-terminus: Peptide chain release factor 3 (525 aa).

The 268-residue stretch at 9–276 (AKRRTFAIIS…GFTRYAPAPQ (268 aa)) folds into the tr-type G domain. GTP is bound by residues 18–25 (SHPDAGKT), 86–90 (DTPGH), and 140–143 (NKFD).

This sequence belongs to the TRAFAC class translation factor GTPase superfamily. Classic translation factor GTPase family. PrfC subfamily.

It localises to the cytoplasm. Functionally, increases the formation of ribosomal termination complexes and stimulates activities of RF-1 and RF-2. It binds guanine nucleotides and has strong preference for UGA stop codons. It may interact directly with the ribosome. The stimulation of RF-1 and RF-2 is significantly reduced by GTP and GDP, but not by GMP. The polypeptide is Peptide chain release factor 3 (Francisella tularensis subsp. mediasiatica (strain FSC147)).